Reading from the N-terminus, the 215-residue chain is Orotidine 5'-phosphate decarboxylase (215 aa).

Residues Asp12, Lys34, Asp60–Thr69, Ser117, Pro170–Ala180, Gly193, and Arg194 each bind substrate. The Proton donor role is filled by Lys62.

The protein belongs to the OMP decarboxylase family. Type 1 subfamily. In terms of assembly, homodimer.

It catalyses the reaction orotidine 5'-phosphate + H(+) = UMP + CO2. The protein operates within pyrimidine metabolism; UMP biosynthesis via de novo pathway; UMP from orotate: step 2/2. Functionally, catalyzes the decarboxylation of orotidine 5'-monophosphate (OMP) to uridine 5'-monophosphate (UMP). The sequence is that of Orotidine 5'-phosphate decarboxylase from Methanococcoides burtonii (strain DSM 6242 / NBRC 107633 / OCM 468 / ACE-M).